The primary structure comprises 429 residues: Enolase (429 aa).

A (2R)-2-phosphoglycerate-binding site is contributed by glutamine 164. The active-site Proton donor is the glutamate 206. Aspartate 243, glutamate 286, and aspartate 313 together coordinate Mg(2+). Positions 338, 367, 368, and 389 each coordinate (2R)-2-phosphoglycerate. Lysine 338 acts as the Proton acceptor in catalysis.

Belongs to the enolase family. Mg(2+) is required as a cofactor.

It localises to the cytoplasm. It is found in the secreted. Its subcellular location is the cell surface. The catalysed reaction is (2R)-2-phosphoglycerate = phosphoenolpyruvate + H2O. The protein operates within carbohydrate degradation; glycolysis; pyruvate from D-glyceraldehyde 3-phosphate: step 4/5. In terms of biological role, catalyzes the reversible conversion of 2-phosphoglycerate (2-PG) into phosphoenolpyruvate (PEP). It is essential for the degradation of carbohydrates via glycolysis. This Thermosipho africanus (strain TCF52B) protein is Enolase.